We begin with the raw amino-acid sequence, 122 residues long: Small ribosomal subunit protein uS13 (122 aa).

The disordered stretch occupies residues 94-122; sequence RGLPVRGQKTKTNARTRKGPRKTVAGKRK.

Belongs to the universal ribosomal protein uS13 family. Part of the 30S ribosomal subunit. Forms a loose heterodimer with protein S19. Forms two bridges to the 50S subunit in the 70S ribosome.

Located at the top of the head of the 30S subunit, it contacts several helices of the 16S rRNA. In the 70S ribosome it contacts the 23S rRNA (bridge B1a) and protein L5 of the 50S subunit (bridge B1b), connecting the 2 subunits; these bridges are implicated in subunit movement. Contacts the tRNAs in the A and P-sites. This Syntrophotalea carbinolica (strain DSM 2380 / NBRC 103641 / GraBd1) (Pelobacter carbinolicus) protein is Small ribosomal subunit protein uS13.